Consider the following 458-residue polypeptide: Adenylosuccinate synthetase (458 aa).

Residues 17 to 23 (GDEGKGK) and 45 to 47 (GHT) each bind GTP. The Proton acceptor role is filled by D18. The Mg(2+) site is built by D18 and G45. Residues 18-21 (DEGK), 43-46 (NAGH), T137, R151, Q247, T262, and R330 each bind IMP. The active-site Proton donor is the H46. 326 to 332 (VTTGRSR) is a binding site for substrate. Residues R332, 358-360 (KLD), and 440-442 (STG) each bind GTP.

It belongs to the adenylosuccinate synthetase family. As to quaternary structure, homodimer. It depends on Mg(2+) as a cofactor.

It is found in the cytoplasm. It carries out the reaction IMP + L-aspartate + GTP = N(6)-(1,2-dicarboxyethyl)-AMP + GDP + phosphate + 2 H(+). It participates in purine metabolism; AMP biosynthesis via de novo pathway; AMP from IMP: step 1/2. Its function is as follows. Plays an important role in the de novo pathway of purine nucleotide biosynthesis. Catalyzes the first committed step in the biosynthesis of AMP from IMP. This is Adenylosuccinate synthetase from Albidiferax ferrireducens (strain ATCC BAA-621 / DSM 15236 / T118) (Rhodoferax ferrireducens).